Here is a 326-residue protein sequence, read N- to C-terminus: Glutaredoxin 3 (326 aa).

The Thioredoxin domain occupies 1-108 (MANFTDAASL…LTNKVQRLGS (108 aa)). Glutaredoxin domains are found at residues 125–227 (NQRL…VSLE) and 227–326 (ENRL…KGEN). The [2Fe-2S] cluster site is built by cysteine 150 and cysteine 252.

As to quaternary structure, homodimer; the homodimer is independent of 2Fe-2S clusters. Heterotrimer; forms a heterotrimeric complex composed by two bola2 molecules and one glrx3 molecule; linked by [2Fe-2S] clusters.

Its subcellular location is the cytoplasm. The protein resides in the cytosol. In terms of biological role, together with bola2, acts as a cytosolic iron-sulfur (Fe-S) cluster assembly factor that facilitates [2Fe-2S] cluster insertion into a subset of cytosolic proteins. Required for hemoglobin maturation. Does not possess any thyoredoxin activity since it lacks the conserved motif that is essential for catalytic activity. The sequence is that of Glutaredoxin 3 (glrx3) from Danio rerio (Zebrafish).